The sequence spans 326 residues: Nucleoporin Nup37 (326 aa).

WD repeat units follow at residues 70-117, 122-162, 164-203, and 294-325; these read HHGV…KNEY, GHSD…TAHF, LHSP…AILS, and GSVA…WVTE.

In terms of assembly, component of the Nup107-160 subcomplex of the nuclear pore complex (NPC). The Nup107-160 subcomplex includes NUP160, NUP133, NUP107, NUP98, NUP85, NUP43, NUP37, SEH1 and SEC13.

It is found in the chromosome. The protein localises to the centromere. Its subcellular location is the kinetochore. It localises to the nucleus. The protein resides in the nuclear pore complex. Its function is as follows. Component of the Nup107-160 subcomplex of the nuclear pore complex (NPC). The Nup107-160 subcomplex is required for the assembly of a functional NPC. The Nup107-160 subcomplex is also required for normal kinetochore microtubule attachment, mitotic progression and chromosome segregation. The polypeptide is Nucleoporin Nup37 (Nup37) (Mus musculus (Mouse)).